The following is a 364-amino-acid chain: Ribosomal RNA large subunit methyltransferase F (364 aa).

Positions 1 to 17 (MPKPAIKTAAKPATSSA) are enriched in low complexity. The tract at residues 1–53 (MPKPAIKTAAKPATSSAGKRGKPITPKSVAKPQAAKPKTVSKPKVKPGEKKRL) is disordered. The segment covering 39-53 (TVSKPKVKPGEKKRL) has biased composition (basic residues).

The protein belongs to the methyltransferase superfamily. METTL16/RlmF family.

Its subcellular location is the cytoplasm. It carries out the reaction adenosine(1618) in 23S rRNA + S-adenosyl-L-methionine = N(6)-methyladenosine(1618) in 23S rRNA + S-adenosyl-L-homocysteine + H(+). Its function is as follows. Specifically methylates the adenine in position 1618 of 23S rRNA. In Shewanella sp. (strain MR-4), this protein is Ribosomal RNA large subunit methyltransferase F.